A 120-amino-acid chain; its full sequence is NAD(P)H-quinone oxidoreductase subunit 3 (120 aa).

Helical transmembrane passes span 7-27 (YEYF…SLTA), 64-84 (MFAL…PWAV), and 89-109 (LGLL…VALV).

It belongs to the complex I subunit 3 family. As to quaternary structure, NDH-1 can be composed of about 15 different subunits; different subcomplexes with different compositions have been identified which probably have different functions.

Its subcellular location is the cellular thylakoid membrane. The enzyme catalyses a plastoquinone + NADH + (n+1) H(+)(in) = a plastoquinol + NAD(+) + n H(+)(out). It catalyses the reaction a plastoquinone + NADPH + (n+1) H(+)(in) = a plastoquinol + NADP(+) + n H(+)(out). In terms of biological role, NDH-1 shuttles electrons from an unknown electron donor, via FMN and iron-sulfur (Fe-S) centers, to quinones in the respiratory and/or the photosynthetic chain. The immediate electron acceptor for the enzyme in this species is believed to be plastoquinone. Couples the redox reaction to proton translocation, and thus conserves the redox energy in a proton gradient. Cyanobacterial NDH-1 also plays a role in inorganic carbon-concentration. The polypeptide is NAD(P)H-quinone oxidoreductase subunit 3 (Microcystis aeruginosa (strain NIES-843 / IAM M-2473)).